A 122-amino-acid chain; its full sequence is Large ribosomal subunit protein uL14 (122 aa).

Belongs to the universal ribosomal protein uL14 family. As to quaternary structure, part of the 50S ribosomal subunit. Forms a cluster with proteins L3 and L19. In the 70S ribosome, L14 and L19 interact and together make contacts with the 16S rRNA in bridges B5 and B8.

Functionally, binds to 23S rRNA. Forms part of two intersubunit bridges in the 70S ribosome. The chain is Large ribosomal subunit protein uL14 from Bacillus cytotoxicus (strain DSM 22905 / CIP 110041 / 391-98 / NVH 391-98).